Reading from the N-terminus, the 333-residue chain is Structure-specific endonuclease subunit SLX1 homolog (333 aa).

Residues 68–157 form the GIY-YIG domain; sequence DFFGVYCLLS…KSRRLRLLNL (90 aa). The SLX1-type zinc finger occupies 237–293; it reads CSLCLKPILSISELLRCHANETCKSHFHMRCLSKHALNAVDEYRTSLFPIQGQCPKC.

This sequence belongs to the SLX1 family. Forms a heterodimer with a member of the SLX4 family. A divalent metal cation is required as a cofactor.

It localises to the nucleus. Its function is as follows. Catalytic subunit of a heterodimeric structure-specific endonuclease that resolves DNA secondary structures generated during DNA repair and recombination. Has endonuclease activity towards branched DNA substrates, introducing single-strand cuts in duplex DNA close to junctions with ss-DNA. The protein is Structure-specific endonuclease subunit SLX1 homolog of Brugia malayi (Filarial nematode worm).